The chain runs to 269 residues: Ribosomal RNA large subunit methyltransferase E (269 aa).

Residues G48, W50, D68, D86, and D111 each coordinate S-adenosyl-L-methionine. K151 serves as the catalytic Proton acceptor. Residues 198 to 256 (PVAAGDRIEVTVEERGDEGDGIAYVEGYSIFVSDADVGETVTVEVVDAKPRFGFATRVD) form the TRAM domain.

Belongs to the class I-like SAM-binding methyltransferase superfamily. RNA methyltransferase RlmE family.

The protein resides in the cytoplasm. It catalyses the reaction uridine(2552) in 23S rRNA + S-adenosyl-L-methionine = 2'-O-methyluridine(2552) in 23S rRNA + S-adenosyl-L-homocysteine + H(+). Specifically methylates the uridine in position 2552 of 23S rRNA at the 2'-O position of the ribose in the fully assembled 50S ribosomal subunit. This Halorubrum lacusprofundi (strain ATCC 49239 / DSM 5036 / JCM 8891 / ACAM 34) protein is Ribosomal RNA large subunit methyltransferase E.